The sequence spans 282 residues: NADPH-dependent 7-cyano-7-deazaguanine reductase (282 aa).

Residue 88–90 (IES) participates in substrate binding. NADPH is bound at residue 90 to 91 (SK). The Thioimide intermediate role is filled by cysteine 190. Aspartate 197 serves as the catalytic Proton donor. 229–230 (HE) contributes to the substrate binding site. 258 to 259 (RG) contributes to the NADPH binding site.

This sequence belongs to the GTP cyclohydrolase I family. QueF type 2 subfamily. In terms of assembly, homodimer.

Its subcellular location is the cytoplasm. It catalyses the reaction 7-aminomethyl-7-carbaguanine + 2 NADP(+) = 7-cyano-7-deazaguanine + 2 NADPH + 3 H(+). Its pathway is tRNA modification; tRNA-queuosine biosynthesis. In terms of biological role, catalyzes the NADPH-dependent reduction of 7-cyano-7-deazaguanine (preQ0) to 7-aminomethyl-7-deazaguanine (preQ1). The polypeptide is NADPH-dependent 7-cyano-7-deazaguanine reductase (Escherichia coli O139:H28 (strain E24377A / ETEC)).